A 790-amino-acid chain; its full sequence is Vacuolar protein sorting-associated protein 35B (790 aa).

The protein belongs to the VPS35 family. Component of the retromer complex which consists of VPS29 (MAG1), VPS26 (VPS26A or VPS26B), VPS35 (VPS35A or VPS35B or VPS35C), VPS5/17 (SNX1 or SNX2A or SNX2B). Component of a retromer subcomplex consisting of VPS29 (MAG1), VPS26 (VPS26A or VPS26B), VPS35 (VPS35A or VPS35B or VPS35C). Expressed in siliques and maturing seeds (at protein level).

Its subcellular location is the cytoplasm. The protein localises to the endosome membrane. It is found in the prevacuolar compartment membrane. The protein resides in the golgi apparatus. It localises to the trans-Golgi network membrane. Plays a role in vesicular protein sorting. Component of the membrane-associated retromer complex which is essential in endosome-to-Golgi retrograde transport. Also involved in the efficient sorting of seed storage proteins globulin 12S and albumin 2S. The VPS29-VPS26-VPS35 subcomplex may be involved in recycling of specific cargos from endosome to the plasma membrane. The sequence is that of Vacuolar protein sorting-associated protein 35B (VPS35B) from Arabidopsis thaliana (Mouse-ear cress).